Reading from the N-terminus, the 545-residue chain is Membrane protein insertase YidC (545 aa).

The next 4 membrane-spanning stretches (helical) occupy residues 350 to 370 (IIGNWGWAIIVLTIIVKAVLY), 424 to 444 (LPMLLQIPVFIGLYWALFASV), 461 to 481 (ADPYYILPIIMAATMFAQTYL), and 498 to 518 (PLVFSVMFFFFPAGLVLYWVV).

Belongs to the OXA1/ALB3/YidC family. Type 1 subfamily. In terms of assembly, interacts with the Sec translocase complex via SecD. Specifically interacts with transmembrane segments of nascent integral membrane proteins during membrane integration.

It is found in the cell inner membrane. Required for the insertion and/or proper folding and/or complex formation of integral membrane proteins into the membrane. Involved in integration of membrane proteins that insert both dependently and independently of the Sec translocase complex, as well as at least some lipoproteins. Aids folding of multispanning membrane proteins. The protein is Membrane protein insertase YidC of Neisseria meningitidis serogroup C (strain 053442).